Consider the following 1438-residue polypeptide: DNA polymerase III PolC-type (1438 aa).

One can recognise an Exonuclease domain in the interval Tyr-422–Phe-578.

This sequence belongs to the DNA polymerase type-C family. PolC subfamily.

It is found in the cytoplasm. It carries out the reaction DNA(n) + a 2'-deoxyribonucleoside 5'-triphosphate = DNA(n+1) + diphosphate. In terms of biological role, required for replicative DNA synthesis. This DNA polymerase also exhibits 3' to 5' exonuclease activity. In Staphylococcus epidermidis (strain ATCC 35984 / DSM 28319 / BCRC 17069 / CCUG 31568 / BM 3577 / RP62A), this protein is DNA polymerase III PolC-type.